The chain runs to 960 residues: Mast/stem cell growth factor receptor Kit (960 aa).

Positions 1–24 are cleaved as a signal peptide; the sequence is MEGAHLAWELAHAVLLLSLIPAGG. Over 25–511 the chain is Extracellular; the sequence is SVPHEESSLV…IRTHTLFTPL (487 aa). Ig-like C2-type domains lie at 27–102, 111–194, 201–294, 303–396, and 399–497; these read PHEE…VFVK, DSLI…LNVR, PVIT…LKAL, ATMN…VYVK, and PEIL…FNFA. Cystine bridges form between cysteine 45-cysteine 87, cysteine 126-cysteine 175, cysteine 141-cysteine 172, and cysteine 222-cysteine 276. Residues asparagine 76, asparagine 135, asparagine 149, asparagine 269, asparagine 286, asparagine 306, asparagine 318, asparagine 338, asparagine 343, asparagine 356, asparagine 453, and asparagine 469 are each glycosylated (N-linked (GlcNAc...) asparagine). Cysteine 414 and cysteine 481 are joined by a disulfide. A helical membrane pass occupies residues 512 to 532; sequence LIAFGVAAGLMCIIVMILVYI. Over 533–960 the chain is Cytoplasmic; the sequence is YLQKPKYEVQ…TQPLLVREDV (428 aa). Position 554 (tyrosine 554) interacts with Mg(2+). Phosphotyrosine; by autocatalysis is present on residues tyrosine 554 and tyrosine 556. Positions 575–913 constitute a Protein kinase domain; the sequence is LSFGKTLGAG…QIVQLIEQQL (339 aa). ATP contacts are provided by residues 582 to 589, lysine 609, and 657 to 663; these read GAGAFGKV and EYCCYGD. A phosphotyrosine; by autocatalysis mark is found at tyrosine 689 and tyrosine 706. The Proton acceptor role is filled by aspartate 777. Position 781 (arginine 781) interacts with ATP. Residues asparagine 782 and aspartate 795 each contribute to the Mg(2+) site. 2 positions are modified to phosphotyrosine; by autocatalysis: tyrosine 808 and tyrosine 921.

The protein belongs to the protein kinase superfamily. Tyr protein kinase family. CSF-1/PDGF receptor subfamily. In terms of processing, ubiquitinated. KIT is rapidly ubiquitinated after autophosphorylation induced by KITLG/SCF binding, leading to internalization and degradation. Post-translationally, autophosphorylated on tyrosine residues. KITLG/SCF binding promotes autophosphorylation. Phosphorylated tyrosine residues are important for interaction with specific binding partners. In terms of tissue distribution, high in the brain and testes and also present in the bursa of Fabricus, heart, kidney, lung, spleen thymus and ovary.

Its subcellular location is the cell membrane. The catalysed reaction is L-tyrosyl-[protein] + ATP = O-phospho-L-tyrosyl-[protein] + ADP + H(+). Functionally, tyrosine-protein kinase that acts as a cell-surface receptor for the cytokine KITLG/SCF and plays an essential role in the regulation of cell survival and proliferation, hematopoiesis, stem cell maintenance, gametogenesis, mast cell development, migration and function, and in melanogenesis. In response to KITLG/SCF binding, KIT can activate several signaling pathways. Promotes phosphorylation of PIK3R1, the regulatory subunit of phosphatidylinositol 3-kinase, and subsequent activation of the kinase AKT1. Activated KIT also transmits signals via GRB2 and activation of RAS, RAF1 and the MAP kinases MAPK1/ERK2 and/or MAPK3/ERK1. Promotes activation of STAT family members STAT1, STAT3, STAT5A and STAT5B. KIT promotes activation of PLCG1, leading to the production of the cellular signaling molecules diacylglycerol and inositol 1,4,5-trisphosphate. KIT signaling is modulated by protein phosphatases, and by rapid internalization and degradation of the receptor. The protein is Mast/stem cell growth factor receptor Kit (KIT) of Gallus gallus (Chicken).